Here is a 769-residue protein sequence, read N- to C-terminus: Amino-acid acetyltransferase, mitochondrial (769 aa).

The disordered stretch occupies residues L150–S172. Positions Q159–S172 are enriched in polar residues. The N-acetyltransferase domain maps to M590 to P759.

This sequence belongs to the acetyltransferase family.

It is found in the mitochondrion. The catalysed reaction is L-glutamate + acetyl-CoA = N-acetyl-L-glutamate + CoA + H(+). It functions in the pathway amino-acid biosynthesis; L-arginine biosynthesis; N(2)-acetyl-L-ornithine from L-glutamate: step 1/4. Functionally, N-acetylglutamate synthase involved in arginine biosynthesis. In Penicillium rubens (strain ATCC 28089 / DSM 1075 / NRRL 1951 / Wisconsin 54-1255) (Penicillium chrysogenum), this protein is Amino-acid acetyltransferase, mitochondrial (arg2).